Here is a 166-residue protein sequence, read N- to C-terminus: Lipoprotein signal peptidase (166 aa).

Transmembrane regions (helical) follow at residues 12-32 (WLWL…LILQ), 70-90 (WFFA…MYRA), and 102-122 (ALII…GFVV). Active-site residues include aspartate 123 and aspartate 141. Residues 142 to 162 (SAICFGAAMIVLEGFLPNAAA) traverse the membrane as a helical segment.

It belongs to the peptidase A8 family.

Its subcellular location is the cell inner membrane. The catalysed reaction is Release of signal peptides from bacterial membrane prolipoproteins. Hydrolyzes -Xaa-Yaa-Zaa-|-(S,diacylglyceryl)Cys-, in which Xaa is hydrophobic (preferably Leu), and Yaa (Ala or Ser) and Zaa (Gly or Ala) have small, neutral side chains.. It participates in protein modification; lipoprotein biosynthesis (signal peptide cleavage). In terms of biological role, this protein specifically catalyzes the removal of signal peptides from prolipoproteins. This chain is Lipoprotein signal peptidase, found in Enterobacter sp. (strain 638).